Consider the following 195-residue polypeptide: Shikimate kinase (195 aa).

31 to 36 (GAGKSC) contacts ATP. Ser35 is a binding site for Mg(2+). 3 residues coordinate substrate: Asp53, Arg77, and Gly99. Arg137 lines the ATP pocket. Arg156 provides a ligand contact to substrate.

The protein belongs to the shikimate kinase family. Monomer. The cofactor is Mg(2+).

The protein resides in the cytoplasm. The catalysed reaction is shikimate + ATP = 3-phosphoshikimate + ADP + H(+). The protein operates within metabolic intermediate biosynthesis; chorismate biosynthesis; chorismate from D-erythrose 4-phosphate and phosphoenolpyruvate: step 5/7. Catalyzes the specific phosphorylation of the 3-hydroxyl group of shikimic acid using ATP as a cosubstrate. This Paramagnetospirillum magneticum (strain ATCC 700264 / AMB-1) (Magnetospirillum magneticum) protein is Shikimate kinase.